We begin with the raw amino-acid sequence, 468 residues long: uncharacterized protein (468 aa).

Residues A447–H468 form a disordered region.

This sequence belongs to the mycobacterial PPE family.

This is an uncharacterized protein from Mycobacterium tuberculosis (strain ATCC 25618 / H37Rv).